The sequence spans 474 residues: BPI fold-containing family B member 1 (474 aa).

Residues 1 to 21 form the signal peptide; it reads MAGPWIITLLCGLLGATLVQA. N-linked (GlcNAc...) asparagine glycans are attached at residues Asn-153, Asn-160, Asn-263, and Asn-400. A disulfide bridge links Cys-157 with Cys-200.

This sequence belongs to the BPI/LBP/Plunc superfamily. Plunc family. As to expression, expressed in tongue, lung, thymus, and stomach. Expressed in epithelia of palate, anterior pharynx, trachea and upper bronchi. Expressed in distal tip of papillae in the anterior third of the tongue and in serous cells of von Ebner glands in the posterior third of the tongue. Expressed in columnar epithelium of the duodenum in embryonic gut at 16.5 dpc.

Its subcellular location is the secreted. In terms of biological role, may play a role in innate immunity in mouth, nose and lungs. Binds bacterial lipopolysaccharide (LPS) and modulates the cellular responses to LPS. May be involved in formation of the left-right axis in the node of the developing embryo. This is BPI fold-containing family B member 1 (Bpifb1) from Mus musculus (Mouse).